The sequence spans 102 residues: uncharacterized protein (102 aa).

The next 2 helical transmembrane spans lie at 21–43 and 58–80; these read FSSS…TPVF and SFAV…YFFC.

It is found in the membrane. This is an uncharacterized protein from Saccharomyces cerevisiae (strain ATCC 204508 / S288c) (Baker's yeast).